A 543-amino-acid chain; its full sequence is CTP synthase (543 aa).

The tract at residues 1-265 (MTRFVFITGG…DQEVLRYFDL (265 aa)) is amidoligase domain. Ser13 provides a ligand contact to CTP. Position 13 (Ser13) interacts with UTP. 14–19 (SLGKGI) contacts ATP. Position 54 (Tyr54) interacts with L-glutamine. Asp71 is an ATP binding site. Residues Asp71 and Glu139 each coordinate Mg(2+). Residues 146-148 (DIE), 186-191 (KTKPTQ), and Lys222 contribute to the CTP site. UTP contacts are provided by residues 186-191 (KTKPTQ) and Lys222. One can recognise a Glutamine amidotransferase type-1 domain in the interval 291 to 542 (RVAIVGKYTA…IAAAVKEAHR (252 aa)). Position 354 (Gly354) interacts with L-glutamine. Cys381 serves as the catalytic Nucleophile; for glutamine hydrolysis. L-glutamine-binding positions include 382 to 385 (FGMQ), Glu405, and Arg470. Catalysis depends on residues His515 and Glu517.

It belongs to the CTP synthase family. In terms of assembly, homotetramer.

The enzyme catalyses UTP + L-glutamine + ATP + H2O = CTP + L-glutamate + ADP + phosphate + 2 H(+). It catalyses the reaction L-glutamine + H2O = L-glutamate + NH4(+). It carries out the reaction UTP + NH4(+) + ATP = CTP + ADP + phosphate + 2 H(+). The protein operates within pyrimidine metabolism; CTP biosynthesis via de novo pathway; CTP from UDP: step 2/2. With respect to regulation, allosterically activated by GTP, when glutamine is the substrate; GTP has no effect on the reaction when ammonia is the substrate. The allosteric effector GTP functions by stabilizing the protein conformation that binds the tetrahedral intermediate(s) formed during glutamine hydrolysis. Inhibited by the product CTP, via allosteric rather than competitive inhibition. Catalyzes the ATP-dependent amination of UTP to CTP with either L-glutamine or ammonia as the source of nitrogen. Regulates intracellular CTP levels through interactions with the four ribonucleotide triphosphates. This Gluconobacter oxydans (strain 621H) (Gluconobacter suboxydans) protein is CTP synthase.